A 442-amino-acid chain; its full sequence is F-box protein KIB2 (442 aa).

Residues 62 to 109 (SKQPVLVLDLLRSILERLSFVDFHRGRCISLEWYSASESCLAVKNPTS) form the F-box domain. A Nuclear localization signal motif is present at residues 236–243 (HKKGDENY).

In terms of assembly, interacts with ASK7/BIN2/SK21.

It is found in the cytoplasm. The protein localises to the nucleus. The protein resides in the nucleolus. Its function is as follows. Component of SCF(ASK-cullin-F-box) E3 ubiquitin ligase complexes, which may mediate the ubiquitination and subsequent proteasomal degradation of target proteins. Required for brassinosteroid (BR) signal transduction. Mediates ASK7/BIN2/SK21 inactivation both by competing with substrate binding (e.g. BZR1) and by promoting its ubiquitination and subsequent proteasomal degradation. In Arabidopsis thaliana (Mouse-ear cress), this protein is F-box protein KIB2.